Reading from the N-terminus, the 88-residue chain is Small ribosomal subunit protein uS15 (88 aa).

It belongs to the universal ribosomal protein uS15 family. In terms of assembly, part of the 30S ribosomal subunit. Forms a bridge to the 50S subunit in the 70S ribosome, contacting the 23S rRNA.

One of the primary rRNA binding proteins, it binds directly to 16S rRNA where it helps nucleate assembly of the platform of the 30S subunit by binding and bridging several RNA helices of the 16S rRNA. In terms of biological role, forms an intersubunit bridge (bridge B4) with the 23S rRNA of the 50S subunit in the ribosome. The sequence is that of Small ribosomal subunit protein uS15 from Metamycoplasma arthritidis (strain 158L3-1) (Mycoplasma arthritidis).